The chain runs to 285 residues: Energy-coupling factor transporter ATP-binding protein EcfA3 (285 aa).

An ABC transporter domain is found at 6–242 (LKVEELNYNY…KEVIRKVNLR (237 aa)). 39–46 (GGNGVGKS) is an ATP binding site.

The protein belongs to the ABC transporter superfamily. Energy-coupling factor EcfA family. In terms of assembly, forms a stable energy-coupling factor (ECF) transporter complex composed of 2 membrane-embedded substrate-binding proteins (S component), 2 ATP-binding proteins (A component) and 2 transmembrane proteins (T component).

It localises to the cell membrane. ATP-binding (A) component of a common energy-coupling factor (ECF) ABC-transporter complex. Unlike classic ABC transporters this ECF transporter provides the energy necessary to transport a number of different substrates. In Clostridium perfringens (strain ATCC 13124 / DSM 756 / JCM 1290 / NCIMB 6125 / NCTC 8237 / Type A), this protein is Energy-coupling factor transporter ATP-binding protein EcfA3.